A 98-amino-acid chain; its full sequence is Large ribosomal subunit protein uL23 (98 aa).

This sequence belongs to the universal ribosomal protein uL23 family. Part of the 50S ribosomal subunit. Contacts protein L29, and trigger factor when it is bound to the ribosome.

Its function is as follows. One of the early assembly proteins it binds 23S rRNA. One of the proteins that surrounds the polypeptide exit tunnel on the outside of the ribosome. Forms the main docking site for trigger factor binding to the ribosome. The sequence is that of Large ribosomal subunit protein uL23 from Jannaschia sp. (strain CCS1).